The primary structure comprises 256 residues: Small ribosomal subunit protein uS2 (256 aa).

Belongs to the universal ribosomal protein uS2 family.

The sequence is that of Small ribosomal subunit protein uS2 from Rhizobium rhizogenes (strain K84 / ATCC BAA-868) (Agrobacterium radiobacter).